A 32-amino-acid polypeptide reads, in one-letter code: uncharacterized protein (32 aa).

This is an uncharacterized protein from Haloarcula hispanica (His1V).